Reading from the N-terminus, the 2873-residue chain is Serine/threonine-protein kinase TEL1 (2873 aa).

The FAT domain occupies 1830-2425 (KFYQLACEVK…LYLLLSLKKH (596 aa)). A PI3K/PI4K catalytic domain is found at 2530–2839 (DKKISIATSG…AIMTVIEKLN (310 aa)). The tract at residues 2536 to 2542 (ATSGLSL) is G-loop. The catalytic loop stretch occupies residues 2706 to 2714 (GLGDRHCNN). The activation loop stretch occupies residues 2726-2750 (HIDLGVAFDQGKRLAIPETVPFRLT). An FATC domain is found at 2841-2873 (NGLSTEAAVRELIQEATSTQNLALIYFGWSPFY).

Belongs to the PI3/PI4-kinase family. ATM subfamily. Associates with DNA double-strand breaks.

It localises to the nucleus. The protein resides in the chromosome. The protein localises to the telomere. It carries out the reaction L-seryl-[protein] + ATP = O-phospho-L-seryl-[protein] + ADP + H(+). The catalysed reaction is L-threonyl-[protein] + ATP = O-phospho-L-threonyl-[protein] + ADP + H(+). Functionally, serine/threonine protein kinase which activates checkpoint signaling upon genotoxic stresses such as ionizing radiation (IR), ultraviolet light (UV), or DNA replication stalling, thereby acting as a DNA damage sensor. Recognizes the substrate consensus sequence [ST]-Q. Phosphorylates histone H2A to form H2AS128ph (gamma-H2A) at sites of DNA damage, involved in the regulation of DNA damage response mechanism. Required for the control of telomere length and genome stability. This is Serine/threonine-protein kinase TEL1 (TEL1) from Candida albicans (strain SC5314 / ATCC MYA-2876) (Yeast).